Consider the following 100-residue polypeptide: Urease subunit gamma (100 aa).

It belongs to the urease gamma subunit family. In terms of assembly, heterotrimer of UreA (gamma), UreB (beta) and UreC (alpha) subunits. Three heterotrimers associate to form the active enzyme.

The protein resides in the cytoplasm. The enzyme catalyses urea + 2 H2O + H(+) = hydrogencarbonate + 2 NH4(+). The protein operates within nitrogen metabolism; urea degradation; CO(2) and NH(3) from urea (urease route): step 1/1. The sequence is that of Urease subunit gamma from Nostoc sp. (strain PCC 7120 / SAG 25.82 / UTEX 2576).